A 213-amino-acid chain; its full sequence is Probable nicotinate-nucleotide adenylyltransferase (213 aa).

The protein belongs to the NadD family.

It catalyses the reaction nicotinate beta-D-ribonucleotide + ATP + H(+) = deamido-NAD(+) + diphosphate. It participates in cofactor biosynthesis; NAD(+) biosynthesis; deamido-NAD(+) from nicotinate D-ribonucleotide: step 1/1. Its function is as follows. Catalyzes the reversible adenylation of nicotinate mononucleotide (NaMN) to nicotinic acid adenine dinucleotide (NaAD). This is Probable nicotinate-nucleotide adenylyltransferase from Escherichia coli O139:H28 (strain E24377A / ETEC).